The chain runs to 155 residues: Ciliary microtubule inner protein 2C (155 aa).

It belongs to the CIMIP2 family.

The protein localises to the cytoplasm. Its subcellular location is the cytoskeleton. It localises to the cilium axoneme. Its function is as follows. Microtubule inner protein (MIP) part of the dynein-decorated doublet microtubules (DMTs) in cilia axoneme, which is required for motile cilia beating. This chain is Ciliary microtubule inner protein 2C (cimip2cb), found in Xenopus laevis (African clawed frog).